The following is a 64-amino-acid chain: Large ribosomal subunit protein bL35 (64 aa).

A compositionally biased stretch (basic residues) spans 1 to 14 (MKQKTHKGTAKRVK). The interval 1–50 (MKQKTHKGTAKRVKITGSGKLRREQANRRHLLEGKPSKRTRRLKGTEDVA) is disordered. Basic and acidic residues predominate over residues 21 to 36 (LRREQANRRHLLEGKP).

The protein belongs to the bacterial ribosomal protein bL35 family.

In Corynebacterium diphtheriae (strain ATCC 700971 / NCTC 13129 / Biotype gravis), this protein is Large ribosomal subunit protein bL35.